The chain runs to 389 residues: Glutamate 5-kinase (389 aa).

Position 16 (K16) interacts with ATP. Positions 56, 143, and 155 each coordinate substrate. Residue S175 to D176 participates in ATP binding. A PUA domain is found at A281 to P358.

Belongs to the glutamate 5-kinase family.

It is found in the cytoplasm. It carries out the reaction L-glutamate + ATP = L-glutamyl 5-phosphate + ADP. The protein operates within amino-acid biosynthesis; L-proline biosynthesis; L-glutamate 5-semialdehyde from L-glutamate: step 1/2. Functionally, catalyzes the transfer of a phosphate group to glutamate to form L-glutamate 5-phosphate. The sequence is that of Glutamate 5-kinase from Rhizobium johnstonii (strain DSM 114642 / LMG 32736 / 3841) (Rhizobium leguminosarum bv. viciae).